A 395-amino-acid chain; its full sequence is MNGNRFGRLFQVTTYGESHGEAMGVTVSGVPAGVELDEEAIQAQLDRRKPGQSMITTSRGEPDEVVVNSGVQDGYTTGTPIGMVIQNKDARSGKYEPYVTAPRPSHGDYTYSAKFGTRNWGGGGRSSARETVNWVAAGAVAEQVLDASEYDVEIKAHVNQIGDVEADDVSFEQILDHSEENDVRCADPEAAAEMQELIERYQEAGDSIGGSIYFECRGVPRGLGAPRFDGFPSRLGQAMFSIPATTGVEFGLGKDAVNVTGSERNEDWTFDDGESFDHVESEEGDPVPVGNDHGGLQGGITTGEPIYGEATWHAPTSIPKKQRSADWETGEEKDVQVVGRHDPVLPPRAVPVVEAMLYCTVLDFMLLAGRINPDRVDGNPGQYDTDYHPSSPDND.

NADP(+) is bound at residue Arg48. Position 125–127 (125–127) interacts with FMN; sequence RSS. Positions 264-292 are disordered; it reads RNEDWTFDDGESFDHVESEEGDPVPVGND. FMN contacts are provided by residues Gly298, 313–317, and Arg340; that span reads HAPTS. The interval 373–395 is disordered; sequence PDRVDGNPGQYDTDYHPSSPDND.

It belongs to the chorismate synthase family. FMNH2 serves as cofactor.

It catalyses the reaction 5-O-(1-carboxyvinyl)-3-phosphoshikimate = chorismate + phosphate. The protein operates within metabolic intermediate biosynthesis; chorismate biosynthesis; chorismate from D-erythrose 4-phosphate and phosphoenolpyruvate: step 7/7. Its function is as follows. Catalyzes the anti-1,4-elimination of the C-3 phosphate and the C-6 proR hydrogen from 5-enolpyruvylshikimate-3-phosphate (EPSP) to yield chorismate, which is the branch point compound that serves as the starting substrate for the three terminal pathways of aromatic amino acid biosynthesis. This reaction introduces a second double bond into the aromatic ring system. This chain is Chorismate synthase, found in Halorubrum lacusprofundi (strain ATCC 49239 / DSM 5036 / JCM 8891 / ACAM 34).